A 301-amino-acid polypeptide reads, in one-letter code: NADH-cytochrome b5 reductase 2 (301 aa).

The helical transmembrane segment at 14 to 30 (FLVPFAGATALSIGLAL) threads the bilayer. Residues 51–155 (NEWVDLKLSK…KGPIVKWKWE (105 aa)) form the FAD-binding FR-type domain. Residue 158–193 (QFKSIALIGGGTGITPLYQLLHQITSNPKDNTKVNL) participates in FAD binding.

The protein belongs to the flavoprotein pyridine nucleotide cytochrome reductase family. FAD is required as a cofactor.

It is found in the mitochondrion outer membrane. It catalyses the reaction 2 Fe(III)-[cytochrome b5] + NADH = 2 Fe(II)-[cytochrome b5] + NAD(+) + H(+). Functionally, may mediate the reduction of outer membrane cytochrome b5. The protein is NADH-cytochrome b5 reductase 2 (MCR1) of Candida albicans (strain SC5314 / ATCC MYA-2876) (Yeast).